Reading from the N-terminus, the 114-residue chain is Superoxide dismutase [Cu-Zn] (114 aa).

Cu cation contacts are provided by His37, His39, and His54. The segment at Met49–Gly73 is disordered. Zn(2+) is bound by residues His54, His62, His71, and Asp74. Positions Arg58–Gly73 are enriched in basic and acidic residues. Residue His111 coordinates Cu cation.

It belongs to the Cu-Zn superoxide dismutase family. Homodimer. Requires Cu cation as cofactor. It depends on Zn(2+) as a cofactor.

The protein localises to the cytoplasm. It carries out the reaction 2 superoxide + 2 H(+) = H2O2 + O2. In terms of biological role, destroys radicals which are normally produced within the cells and which are toxic to biological systems. This chain is Superoxide dismutase [Cu-Zn], found in Drosophila madeirensis (Fruit fly).